We begin with the raw amino-acid sequence, 321 residues long: Probable E3 ubiquitin-protein ligase BAH1-like 1 (321 aa).

Residues 1 to 149 enclose the SPX domain; that stretch reads MKFAKKYEKY…YSKQGQEFKA (149 aa). Residues 217 to 266 form an RING-type zinc finger; it reads CSICLDTVFDPVALSCGHIYCYLCSCSAASVTIVDGLKSAERKSKCPLCR.

Belongs to the RING-type zinc finger family.

The catalysed reaction is S-ubiquitinyl-[E2 ubiquitin-conjugating enzyme]-L-cysteine + [acceptor protein]-L-lysine = [E2 ubiquitin-conjugating enzyme]-L-cysteine + N(6)-ubiquitinyl-[acceptor protein]-L-lysine.. Its pathway is protein modification; protein ubiquitination. The sequence is that of Probable E3 ubiquitin-protein ligase BAH1-like 1 from Oryza sativa subsp. indica (Rice).